The following is a 609-amino-acid chain: Hemagglutinin/proteinase (609 aa).

The first 24 residues, 1–24 (MKMIQRPLNWLVLAGAATGFPLYA), serve as a signal peptide directing secretion. Positions 25–196 (AQMVTIDDAS…LDQWDGINHA (172 aa)) are excised as a propeptide. Histidine 343 contributes to the Zn(2+) binding site. The active site involves glutamate 344. Zn(2+) contacts are provided by histidine 347 and glutamate 367. Histidine 426 (proton donor) is an active-site residue.

It belongs to the peptidase M4 family. It depends on Zn(2+) as a cofactor.

The protein localises to the secreted. Functionally, may play a role in the pathogenesis of cholera. Hap nicks and activates the A subunit of cholera enterotoxin and related enterotoxins. The protein is Hemagglutinin/proteinase (hap) of Vibrio cholerae serotype O1 (strain ATCC 39315 / El Tor Inaba N16961).